Here is a 166-residue protein sequence, read N- to C-terminus: NAD(P)H-quinone oxidoreductase subunit I, chloroplastic (166 aa).

2 consecutive 4Fe-4S ferredoxin-type domains span residues 55–84 (GRIH…VDWK) and 95–124 (LNYS…MTEE). Positions 64, 67, 70, 74, 104, 107, 110, and 114 each coordinate [4Fe-4S] cluster.

This sequence belongs to the complex I 23 kDa subunit family. As to quaternary structure, NDH is composed of at least 16 different subunits, 5 of which are encoded in the nucleus. The cofactor is [4Fe-4S] cluster.

Its subcellular location is the plastid. The protein localises to the chloroplast thylakoid membrane. It carries out the reaction a plastoquinone + NADH + (n+1) H(+)(in) = a plastoquinol + NAD(+) + n H(+)(out). It catalyses the reaction a plastoquinone + NADPH + (n+1) H(+)(in) = a plastoquinol + NADP(+) + n H(+)(out). Its function is as follows. NDH shuttles electrons from NAD(P)H:plastoquinone, via FMN and iron-sulfur (Fe-S) centers, to quinones in the photosynthetic chain and possibly in a chloroplast respiratory chain. The immediate electron acceptor for the enzyme in this species is believed to be plastoquinone. Couples the redox reaction to proton translocation, and thus conserves the redox energy in a proton gradient. In Steiractinia sodiroi, this protein is NAD(P)H-quinone oxidoreductase subunit I, chloroplastic.